The primary structure comprises 724 residues: Methionine--tRNA ligase (724 aa).

The short motif at Pro-12–Asn-22 is the 'HIGH' region element. The Zn(2+) site is built by Cys-143, Cys-146, Cys-155, and Cys-158. Residues Lys-330–Ser-334 carry the 'KMSKS' region motif. Lys-333 serves as a coordination point for ATP. The 106-residue stretch at Phe-560–Ile-665 folds into the tRNA-binding domain.

Belongs to the class-I aminoacyl-tRNA synthetase family. MetG type 1 subfamily. Homodimer. It depends on Zn(2+) as a cofactor.

The protein localises to the cytoplasm. The enzyme catalyses tRNA(Met) + L-methionine + ATP = L-methionyl-tRNA(Met) + AMP + diphosphate. Functionally, is required not only for elongation of protein synthesis but also for the initiation of all mRNA translation through initiator tRNA(fMet) aminoacylation. The polypeptide is Methionine--tRNA ligase (Borreliella afzelii (strain PKo) (Borrelia afzelii)).